The chain runs to 379 residues: tRNA(Met) cytidine acetate ligase (379 aa).

Residues 7 to 20 (ITEYNPFHNGHQYH), G100, N153, and R178 each bind ATP.

This sequence belongs to the TmcAL family.

The protein localises to the cytoplasm. It carries out the reaction cytidine(34) in elongator tRNA(Met) + acetate + ATP = N(4)-acetylcytidine(34) in elongator tRNA(Met) + AMP + diphosphate. Catalyzes the formation of N(4)-acetylcytidine (ac(4)C) at the wobble position of elongator tRNA(Met), using acetate and ATP as substrates. First activates an acetate ion to form acetyladenylate (Ac-AMP) and then transfers the acetyl group to tRNA to form ac(4)C34. The chain is tRNA(Met) cytidine acetate ligase from Staphylococcus aureus (strain Mu3 / ATCC 700698).